The sequence spans 422 residues: Phosphoserine aminotransferase 2, chloroplastic (422 aa).

Residues 1–50 (MAASTNSFLIGNQTQIPSLKPKSISQSFIHFTKPNTINLTTRTKSVSIRC) constitute a chloroplast transit peptide. Ala-51 carries the post-translational modification N-acetylalanine. Arg-101 lines the L-glutamate pocket. Pyridoxal 5'-phosphate contacts are provided by residues 135-136 (AT), Trp-161, Thr-211, Asp-233, and Gln-256. Residue Lys-257 is modified to N6-(pyridoxal phosphate)lysine. 298–299 (NT) serves as a coordination point for pyridoxal 5'-phosphate.

The protein belongs to the class-V pyridoxal-phosphate-dependent aminotransferase family. SerC subfamily. Pyridoxal 5'-phosphate serves as cofactor.

It localises to the plastid. Its subcellular location is the chloroplast. It carries out the reaction O-phospho-L-serine + 2-oxoglutarate = 3-phosphooxypyruvate + L-glutamate. It catalyses the reaction 4-(phosphooxy)-L-threonine + 2-oxoglutarate = (R)-3-hydroxy-2-oxo-4-phosphooxybutanoate + L-glutamate. It functions in the pathway amino-acid biosynthesis; L-serine biosynthesis; L-serine from 3-phospho-D-glycerate: step 2/3. Involved in the plastidial phosphorylated pathway of serine biosynthesis (PPSB). Catalyzes the reversible conversion of 3-phosphohydroxypyruvate to phosphoserine. This Arabidopsis thaliana (Mouse-ear cress) protein is Phosphoserine aminotransferase 2, chloroplastic (PSAT2).